A 343-amino-acid polypeptide reads, in one-letter code: Ferredoxin--NADP reductase (343 aa).

FAD contacts are provided by C18, D37, Q45, Y50, V90, F125, D290, and T331.

Belongs to the ferredoxin--NADP reductase type 2 family. As to quaternary structure, homodimer. Requires FAD as cofactor.

The catalysed reaction is 2 reduced [2Fe-2S]-[ferredoxin] + NADP(+) + H(+) = 2 oxidized [2Fe-2S]-[ferredoxin] + NADPH. The sequence is that of Ferredoxin--NADP reductase from Parvibaculum lavamentivorans (strain DS-1 / DSM 13023 / NCIMB 13966).